The following is a 923-amino-acid chain: Rap guanine nucleotide exchange factor 3 (923 aa).

Phosphoserine is present on Ser79. The 77-residue stretch at 110–186 (ATCPNLIRDR…RDAQFYRFPG (77 aa)) folds into the DEP domain. The tract at residues 218–242 (TVALRKPPGQRTDEELDLIFEELLH) is interaction with PDE3B. Residues 311 to 314 (GQLA) and 321 to 322 (RA) each bind 3',5'-cyclic AMP. Positions 384–518 (NRYTVMSGTP…EQWPERRRCH (135 aa)) constitute an N-terminal Ras-GEF domain. The segment at 398-422 (ELLLEAMGPDSSAHDPTETFLSDFL) is interaction with PDE3B. Ser528 and Ser864 each carry phosphoserine. The region spanning 662-889 (SAKDLAGQLT…ARISTCSEQS (228 aa)) is the Ras-GEF domain.

As to quaternary structure, interacts with PDE3B and PIK3R6; form a signaling complex that regulates phosphatidylinositol 3-kinase gamma in angiogenesis. As to expression, widely expressed with highest levels in adult kidney, heart, thyroid and brain, and fetal kidney.

The protein resides in the endomembrane system. In terms of biological role, guanine nucleotide exchange factor (GEF) for RAP1A and RAP2A small GTPases that is activated by binding cAMP. Through simultaneous binding of PDE3B to RAPGEF3 and PIK3R6 is assembled in a signaling complex in which it activates the PI3K gamma complex and which is involved in angiogenesis. Plays a role in the modulation of the cAMP-induced dynamic control of endothelial barrier function through a pathway that is independent on Rho-mediated signaling. Required for the actin rearrangement at cell-cell junctions, such as stress fibers and junctional actin. The chain is Rap guanine nucleotide exchange factor 3 (RAPGEF3) from Homo sapiens (Human).